The following is a 101-amino-acid chain: Trp operon repressor homolog (101 aa).

A DNA-binding region spans residues Q59–M82.

Belongs to the TrpR family. Homodimer.

Its subcellular location is the cytoplasm. Its function is as follows. This protein is an aporepressor. When complexed with L-tryptophan it binds the operator region of the trp operon and prevents the initiation of transcription. This Actinobacillus succinogenes (strain ATCC 55618 / DSM 22257 / CCUG 43843 / 130Z) protein is Trp operon repressor homolog.